The chain runs to 66 residues: Potassium channel toxin alpha-KTx 30.3 (66 aa).

The N-terminal stretch at M1–A24 is a signal peptide. 3 disulfide bridges follow: C30/C50, C36/C55, and C40/C57.

The protein belongs to the short scorpion toxin superfamily. Potassium channel inhibitor family. Alpha-KTx 30 subfamily. As to expression, expressed by the venom gland.

The protein localises to the secreted. Its function is as follows. inhibits Kv1.3/KCNA3 channel. The sequence is that of Potassium channel toxin alpha-KTx 30.3 from Scorpiops jendeki (Scorpion).